A 1057-amino-acid chain; its full sequence is Nuclear RNAi defective-3 protein (1057 aa).

Disordered stretches follow at residues 1–89 (MDLL…GLSV) and 344–388 (LTNS…ERTV). The segment covering 17-30 (STAKKPATSASSTP) has biased composition (low complexity). 2 stretches are compositionally biased toward basic and acidic residues: residues 67–81 (PKREHTDRTGPDPKR) and 356–388 (GGRERRDGGGNSRKYDDRRSPRDGEIDYDERTV). In terms of domain architecture, PAZ spans 387-500 (TVSHYQRQFQ…YPMELMSILP (114 aa)). In terms of domain architecture, Piwi spans 677 to 1001 (GIIAEKRPDM…LAKRGHNNYK (325 aa)).

It is found in the cytoplasm. The protein resides in the nucleus. Functionally, transports small interfering RNAs (siRNAs) from the cytoplasm to the nucleus. Required for RNA interference (RNAi) in nuclei. Required for exogenous RNAi-induced H3K27 methylation. In Caenorhabditis elegans, this protein is Nuclear RNAi defective-3 protein (nrde-3).